A 239-amino-acid polypeptide reads, in one-letter code: MINDVISPEFDENGRAMRRIRSFVRRQGRLTKGQQHALDNYWPVMGVEYQAEPVDITALFGRDAPTVLEIGFGMGASLVTMAGHNPQQNFLGIEVHSPGVGACLADATEAELSNLRVMCHDAVEVLENMIPDGSLDMVQLFFPDPWHKARHNKRRIVQTPFVELVRRKLKVGGVFHMATDWQPYAEHMLEVMNGISGYRNLSSDNDYVPRPDSRPLTKFELRGQRLGHGVWDLMFERKE.

S-adenosyl-L-methionine is bound by residues Glu-69, Glu-94, Asp-121, and Asp-144. The active site involves Asp-144. Position 148 (Lys-148) interacts with substrate. Positions 150–155 (RHNKRR) are interaction with RNA. Substrate is bound by residues Asp-180 and 217–220 (TKFE).

Belongs to the class I-like SAM-binding methyltransferase superfamily. TrmB family. Monomer.

It carries out the reaction guanosine(46) in tRNA + S-adenosyl-L-methionine = N(7)-methylguanosine(46) in tRNA + S-adenosyl-L-homocysteine. It functions in the pathway tRNA modification; N(7)-methylguanine-tRNA biosynthesis. Its function is as follows. Catalyzes the formation of N(7)-methylguanine at position 46 (m7G46) in tRNA. The polypeptide is tRNA (guanine-N(7)-)-methyltransferase (Serratia proteamaculans (strain 568)).